Here is a 354-residue protein sequence, read N- to C-terminus: MTPTTTTAELTTEFDYDEDATPCVFTDVLNQSKPVTLFLYGVVFLFGSIGNFLVIFTITWRRRIQCSGDVYFINLAAADLLFVCTLPLWMQYLLDHNSLASVPCTLLTACFYVAMFASLCFITEIALDRYYAIVYMRYRPVKQACLFSIFWWIFAVIIAIPHFMVVTKKDNQCMTDYDYLEVSYPIILNVELMLGAFVIPLSVISYCYYRISRIVAVSQSRHKGRIVRVLIAVVLVFIIFWLPYHLTLFVDTLKLLKWISSSCEFERSLKRALILTESLAFCHCCLNPLLYVFVGTKFRQELHCLLAEFRQRLFSRDVSWYHSMSFSRRSSPSRRETSSDTLSDEVCRVSQIIP.

The Extracellular portion of the chain corresponds to 1-37 (MTPTTTTAELTTEFDYDEDATPCVFTDVLNQSKPVTL). Residue Asn-30 is glycosylated (N-linked (GlcNAc...) asparagine; by host). Residues 38 to 58 (FLYGVVFLFGSIGNFLVIFTI) form a helical membrane-spanning segment. Residues 59–69 (TWRRRIQCSGD) are Cytoplasmic-facing. The helical transmembrane segment at 70 to 90 (VYFINLAAADLLFVCTLPLWM) threads the bilayer. Topologically, residues 91–101 (QYLLDHNSLAS) are extracellular. The helical transmembrane segment at 102–122 (VPCTLLTACFYVAMFASLCFI) threads the bilayer. Topologically, residues 123 to 145 (TEIALDRYYAIVYMRYRPVKQAC) are cytoplasmic. The helical transmembrane segment at 146-166 (LFSIFWWIFAVIIAIPHFMVV) threads the bilayer. At 167 to 183 (TKKDNQCMTDYDYLEVS) the chain is on the extracellular side. The helical transmembrane segment at 184-204 (YPIILNVELMLGAFVIPLSVI) threads the bilayer. At 205 to 228 (SYCYYRISRIVAVSQSRHKGRIVR) the chain is on the cytoplasmic side. A helical transmembrane segment spans residues 229 to 249 (VLIAVVLVFIIFWLPYHLTLF). Topologically, residues 250 to 273 (VDTLKLLKWISSSCEFERSLKRAL) are extracellular. A helical membrane pass occupies residues 274–294 (ILTESLAFCHCCLNPLLYVFV). The Cytoplasmic segment spans residues 295-354 (GTKFRQELHCLLAEFRQRLFSRDVSWYHSMSFSRRSSPSRRETSSDTLSDEVCRVSQIIP).

This sequence belongs to the G-protein coupled receptor 1 family. In terms of assembly, interacts with host GPRASP1; this interaction targets US28 to lysosomes for degradation. Interacts with host CX3CL1/Fractalkine (via N-terminus). Interacts with host Gi alpha-1 subunit GNAI1; this interaction does not lead to the catalytic activation of Gi complex. In terms of processing, phosphorylated. High phosphorylation occurs concomitantly with receptor endocytosis and correlate with low receptor presence at the plasma membrane.

The protein localises to the host cell membrane. Binds to a great number of different CC-chemokines including CCL5/RANTES, CCL2/MCP-1, CCL3/MIP-1-alpha as well as CX3CL1/Fractalkine. Transduces signals resulting in the activation of MAP kinase signaling pathways and augmentation of intracellular calcium ion levels, leading to alterations in chemotactic behavior of vascular smooth muscle cells and macrophages. The US28 receptor also exhibits high levels of agonist-independent signaling activity and agonist-independent endocytosis. Interacts with the host Gi complex without activating it, thereby probably interfering with the chemokine-Gi signaling. May also function as a G protein sink to sequester G protein from the cell surface via internalization. Interacts with endogenous Gaq/11 subunits and thereby constitutively activates phospholipase C. This is G-protein coupled receptor homolog US28 (US28) from Homo sapiens (Human).